Consider the following 434-residue polypeptide: Homogentisate 1,2-dioxygenase (434 aa).

The active-site Proton acceptor is His289. Fe cation-binding residues include His332 and Glu338. Homogentisate contacts are provided by Tyr347 and His368. His368 provides a ligand contact to Fe cation.

Belongs to the homogentisate dioxygenase family. As to quaternary structure, hexamer; dimer of trimers. Fe cation serves as cofactor.

The catalysed reaction is homogentisate + O2 = 4-maleylacetoacetate + H(+). The protein operates within amino-acid degradation; L-phenylalanine degradation; acetoacetate and fumarate from L-phenylalanine: step 4/6. In terms of biological role, involved in the catabolism of homogentisate (2,5-dihydroxyphenylacetate or 2,5-OH-PhAc), a central intermediate in the degradation of phenylalanine and tyrosine. Catalyzes the oxidative ring cleavage of the aromatic ring of homogentisate to yield maleylacetoacetate. In Pseudomonas syringae pv. tomato (strain ATCC BAA-871 / DC3000), this protein is Homogentisate 1,2-dioxygenase.